A 198-amino-acid polypeptide reads, in one-letter code: Lipoprotein signal peptidase (198 aa).

The segment at 1–34 (MDDERVSQDPTAENETDAEDRNDDDPSGSAPPQP) is disordered. Over residues 12 to 26 (AENETDAEDRNDDDP) the composition is skewed to acidic residues. 3 helical membrane-spanning segments follow: residues 42 to 62 (LLFV…ILAV), 92 to 112 (MATG…IGVV), and 120 to 140 (SPWW…NLVD). Residues Asp155 and Asp169 contribute to the active site. Residues 167-187 (VADSGIVCGAILLVVLTLIGL) form a helical membrane-spanning segment.

Belongs to the peptidase A8 family.

The protein resides in the cell membrane. The catalysed reaction is Release of signal peptides from bacterial membrane prolipoproteins. Hydrolyzes -Xaa-Yaa-Zaa-|-(S,diacylglyceryl)Cys-, in which Xaa is hydrophobic (preferably Leu), and Yaa (Ala or Ser) and Zaa (Gly or Ala) have small, neutral side chains.. It participates in protein modification; lipoprotein biosynthesis (signal peptide cleavage). Its function is as follows. This protein specifically catalyzes the removal of signal peptides from prolipoproteins. The protein is Lipoprotein signal peptidase of Rhodococcus jostii (strain RHA1).